Here is a 270-residue protein sequence, read N- to C-terminus: tRNA pseudouridine synthase A (270 aa).

D51 serves as the catalytic Nucleophile. A substrate-binding site is contributed by Y109.

This sequence belongs to the tRNA pseudouridine synthase TruA family. In terms of assembly, homodimer.

The enzyme catalyses uridine(38/39/40) in tRNA = pseudouridine(38/39/40) in tRNA. Its function is as follows. Formation of pseudouridine at positions 38, 39 and 40 in the anticodon stem and loop of transfer RNAs. This chain is tRNA pseudouridine synthase A, found in Burkholderia thailandensis (strain ATCC 700388 / DSM 13276 / CCUG 48851 / CIP 106301 / E264).